We begin with the raw amino-acid sequence, 680 residues long: WD repeat-containing protein 48 homolog (680 aa).

WD repeat units lie at residues 26 to 65, 71 to 110, 113 to 152, 164 to 203, 206 to 245, 248 to 287, 290 to 329, and 350 to 389; these read QHRN…SEKY, HHND…CMST, THRD…ALTA, GSKD…RSMK, GHTE…CVQT, VHKE…NKTL, EEQA…RCTM, and KGGA…KKEQ. A disordered region spans residues 592 to 616; that stretch reads ETTPSGGNANNSLQNSQSDANSEGS.

Belongs to the WD repeat WDR48 family. As to quaternary structure, catalytic component of the Usp12-46 deubiquitylase complex consisting of Usp12-46, Wdr20 and Uaf1; regulatory subunit that, together wtih Wdr20, stabilizes Usp12-46. The Usp12-46 deubiquitylase complex associates with arr/arrow; the interaction leads to deubiquitination and stabilization of arr/arrow.

In terms of biological role, regulatory component of the Usp12-46 deubiquitylase complex. activates deubiquitination by increasing the catalytic turnover without increasing the affinity of deubiquitinating enzymes for the substrate. The complex deubiquitylates the wg/wingless-signaling receptor arr/arrow, which stabilizes the receptor and increases its concentration at the cell surface; this enhances the sensitivity of cells to wg/wingless-signal stimulation. This increases the amplitude and spatial range of the signaling response to the wg/wingless morphogen gradient, facilitating the precise concentration-dependent regulation of its target genes. Together with Wdr20 and Usp12-46 required for wg/wingless-mediated signaling in the wing imaginal disc and for wg/wingless-dependent regulation of intestinal stem cell proliferation. This chain is WD repeat-containing protein 48 homolog, found in Drosophila yakuba (Fruit fly).